A 367-amino-acid polypeptide reads, in one-letter code: Probable protein phosphatase 2C 67 (367 aa).

The segment at 1-79 is disordered; that stretch reads MAHQKREATS…DEKAATNSNV (79 aa). A compositionally biased stretch (basic and acidic residues) spans 31 to 46; it reads AEKEHILTSDASHETN. In terms of domain architecture, PPM-type phosphatase spans 91–365; it reads EADAAEDKGC…DNCTAVLIVF (275 aa). 4 residues coordinate Mn(2+): D131, G132, D312, and D356.

Belongs to the PP2C family. It depends on Mg(2+) as a cofactor. The cofactor is Mn(2+).

It carries out the reaction O-phospho-L-seryl-[protein] + H2O = L-seryl-[protein] + phosphate. The catalysed reaction is O-phospho-L-threonyl-[protein] + H2O = L-threonyl-[protein] + phosphate. The polypeptide is Probable protein phosphatase 2C 67 (Oryza sativa subsp. japonica (Rice)).